Consider the following 588-residue polypeptide: Phosphatidylinositol-3,5-bisphosphate 3-phosphatase mtm-1 (588 aa).

One can recognise a GRAM domain in the interval 20–91; sequence IQESIDLKLL…GQVSRIEKVG (72 aa). The 380-residue stretch at 164–543 folds into the Myotubularin phosphatase domain; sequence GWKIYSAEKE…CGLHVWIDYY (380 aa). Residues N293, N316, and I317 each coordinate a 1,2-diacyl-sn-glycero-3-phospho-(1D-myo-inositol-3,5-bisphosphate). A 1,2-diacyl-sn-glycero-3-phospho-(1D-myo-inositol-3-phosphate) contacts are provided by N293, N316, and I317. C378 acts as the Phosphocysteine intermediate in catalysis. 8 residues coordinate a 1,2-diacyl-sn-glycero-3-phospho-(1D-myo-inositol-3,5-bisphosphate): S379, D380, G381, W382, D383, R384, K420, and R424. A 1,2-diacyl-sn-glycero-3-phospho-(1D-myo-inositol-3-phosphate) contacts are provided by S379, D380, G381, W382, D383, and R384. S379 provides a ligand contact to phosphate. Positions 381, 382, 383, and 384 each coordinate phosphate. R424 serves as a coordination point for a 1,2-diacyl-sn-glycero-3-phospho-(1D-myo-inositol-3-phosphate). A coiled-coil region spans residues 563 to 588; it reads AQFVDEKKQLLDEIMALDDAAQKLTA.

The protein belongs to the protein-tyrosine phosphatase family. Non-receptor class myotubularin subfamily. As to expression, expressed in embryo, larva and in adults. Expressed in a few head and tail neurons. Expressed in hypodermis, body wall and pharyngeal muscles, sheath cells, vulva, distal tip cells and coelomocytes.

It is found in the cell membrane. Its subcellular location is the cell projection. It localises to the phagocytic cup. The protein resides in the apical cell membrane. The protein localises to the cytoplasmic granule membrane. It catalyses the reaction a 1,2-diacyl-sn-glycero-3-phospho-(1D-myo-inositol-3,5-bisphosphate) + H2O = a 1,2-diacyl-sn-glycero-3-phospho-(1D-myo-inositol-5-phosphate) + phosphate. The catalysed reaction is a 1,2-diacyl-sn-glycero-3-phospho-(1D-myo-inositol-3-phosphate) + H2O = a 1,2-diacyl-sn-glycero-3-phospho-(1D-myo-inositol) + phosphate. The enzyme catalyses 1,2-dioctanoyl-sn-glycero-3-phospho-(1-D-myo-inositol-3-phosphate) + H2O = 1,2-dioctanoyl-sn-glycero-3-phospho-(1D-myo-inositol) + phosphate. Lipid phosphatase that specifically dephosphorylates phosphatidylinositol 3-phosphate (PI3P) and phosphatidylinositol 3,5-bisphosphate (PI(3,5)P2). Negatively regulates accumulation of PI3P on intracellular vesicles. Negatively regulates phagocytosis of apoptotic cells probably by limiting the recruitment and/or the activation of ced-5, ced-2 and ced-12 complex. In addition, may positively regulate phagosome maturation by promoting recycling of apoptotic receptor ced-1 back to the plasma membrane. Essential for embryonic and larval development. May promote migration of distal tip cells. The polypeptide is Phosphatidylinositol-3,5-bisphosphate 3-phosphatase mtm-1 (Caenorhabditis elegans).